A 305-amino-acid polypeptide reads, in one-letter code: Probable 2-methylisocitrate lyase 1 (305 aa).

A substrate-binding site is contributed by 52 to 54; the sequence is SGA. The Mg(2+) site is built by D91 and D93. Substrate is bound by residues 128–129, R163, E193, 216–218, R247, and R276; these read CG and NMT.

The protein belongs to the isocitrate lyase/PEP mutase superfamily. Methylisocitrate lyase family. As to quaternary structure, homotetramer; dimer of dimers. The cofactor is Mg(2+).

It carries out the reaction (2S,3R)-3-hydroxybutane-1,2,3-tricarboxylate = pyruvate + succinate. In terms of biological role, catalyzes the thermodynamically favored C-C bond cleavage of (2R,3S)-2-methylisocitrate to yield pyruvate and succinate via an alpha-carboxy-carbanion intermediate. In Corynebacterium glutamicum (strain ATCC 13032 / DSM 20300 / JCM 1318 / BCRC 11384 / CCUG 27702 / LMG 3730 / NBRC 12168 / NCIMB 10025 / NRRL B-2784 / 534), this protein is Probable 2-methylisocitrate lyase 1.